We begin with the raw amino-acid sequence, 267 residues long: Ras-related protein Rab-36 (267 aa).

Val68, Gly69, Lys70, Thr71, Ser72, Asp83, Tyr86, and Thr89 together coordinate GTP. Thr71 is a Mg(2+) binding site. The Switch 1 motif lies at 76–94 (RFCKNVFDRDYKATIGVDF). 2 residues coordinate Mg(2+): Thr89 and Asp112. The Switch 2 signature appears at 113-132 (TAGQEKFKCIASAYYRGAQV). Gly115, Lys172, Asp174, Ser203, Ala204, and Lys205 together coordinate GTP. Residues 243–267 (GDLIQMEGSPPETQESKRPSSLGCC) are disordered. Residues Cys266 and Cys267 are each lipidated (S-geranylgeranyl cysteine).

The protein belongs to the small GTPase superfamily. Rab family. The cofactor is Mg(2+). As to expression, ubiquitously present in all tissues examined.

It localises to the golgi apparatus membrane. It catalyses the reaction GTP + H2O = GDP + phosphate + H(+). Regulated by guanine nucleotide exchange factors (GEFs) which promote the exchange of bound GDP for free GTP. Regulated by GTPase activating proteins (GAPs) which increase the GTP hydrolysis activity. Inhibited by GDP dissociation inhibitors (GDIs). Its function is as follows. The small GTPases Rab are key regulators of intracellular membrane trafficking, from the formation of transport vesicles to their fusion with membranes. Rabs cycle between an inactive GDP-bound form and an active GTP-bound form that is able to recruit to membranes different sets of downstream effectors directly responsible for vesicle formation, movement, tethering and fusion. The polypeptide is Ras-related protein Rab-36 (Homo sapiens (Human)).